A 535-amino-acid polypeptide reads, in one-letter code: Pentatricopeptide repeat-containing protein At5g16420, mitochondrial (535 aa).

Residues 1 to 28 (MFLSRVNPTRFPPFVASRRLFSASASAA) constitute a mitochondrion transit peptide. PPR repeat units follow at residues 82-112 (NYDTYHSILFKLSRARAFDPVESLMADLRNS), 119-153 (GENLFIDLLRNYGLAGRYESSMRIFLRIPDFGVKR), 154-189 (SVRSLNTLLNVLIQNQRFDLVHAMFKNSKESFGITP), 190-224 (NIFTCNLLVKALCKKNDIESAYKVLDEIPSMGLVP), 225-259 (NLVTYTTILGGYVARGDMESAKRVLEEMLDRGWYP), 260-294 (DATTYTVLMDGYCKLGRFSEAATVMDDMEKNEIEP), 295-329 (NEVTYGVMIRALCKEKKSGEARNMFDEMLERSFMP), 330-364 (DSSLCCKVIDALCEDHKVDEACGLWRKMLKNNCMP), 365-395 (DNALLSTLIHWLCKEGRVTEARKLFDEFEKG), 399-433 (SLLTYNTLIAGMCEKGELTEAGRLWDDMYERKCKP), 434-468 (NAFTYNVLIEGLSKNGNVKEGVRVLEEMLEIGCFP), and 469-503 (NKTTFLILFEGLQKLGKEEDAMKIVSMAVMNGKVD).

It belongs to the PPR family. P subfamily.

The protein resides in the mitochondrion. The sequence is that of Pentatricopeptide repeat-containing protein At5g16420, mitochondrial from Arabidopsis thaliana (Mouse-ear cress).